Consider the following 511-residue polypeptide: Bifunctional purine biosynthesis protein PurH (511 aa).

The 145-residue stretch at 1 to 145 (MKKRALVSVS…KNHKFVSVIV (145 aa)) folds into the MGS-like domain.

Belongs to the PurH family.

It carries out the reaction (6R)-10-formyltetrahydrofolate + 5-amino-1-(5-phospho-beta-D-ribosyl)imidazole-4-carboxamide = 5-formamido-1-(5-phospho-D-ribosyl)imidazole-4-carboxamide + (6S)-5,6,7,8-tetrahydrofolate. It catalyses the reaction IMP + H2O = 5-formamido-1-(5-phospho-D-ribosyl)imidazole-4-carboxamide. It functions in the pathway purine metabolism; IMP biosynthesis via de novo pathway; 5-formamido-1-(5-phospho-D-ribosyl)imidazole-4-carboxamide from 5-amino-1-(5-phospho-D-ribosyl)imidazole-4-carboxamide (10-formyl THF route): step 1/1. The protein operates within purine metabolism; IMP biosynthesis via de novo pathway; IMP from 5-formamido-1-(5-phospho-D-ribosyl)imidazole-4-carboxamide: step 1/1. This Bacillus cereus (strain ATCC 14579 / DSM 31 / CCUG 7414 / JCM 2152 / NBRC 15305 / NCIMB 9373 / NCTC 2599 / NRRL B-3711) protein is Bifunctional purine biosynthesis protein PurH.